The following is a 382-amino-acid chain: 6-oxocyclohex-1-ene-1-carbonyl-CoA hydrolase (382 aa).

The protein belongs to the enoyl-CoA hydratase/isomerase family. As to quaternary structure, homohexamer.

It catalyses the reaction 6-oxocyclohex-1-ene-1-carbonyl-CoA + 2 H2O = 3-hydroxy-6-carboxyhexanoyl-CoA + H(+). It participates in aromatic compound metabolism; benzoyl-CoA degradation. Functionally, involved in the central benzoyl-CoA catabolism. Catalyzes the addition of one molecule of water to the double bond and the hydrolytic cleavage of C-C bond in the alicyclic ring, 6-oxocyclohex-1-ene-1-carbonyl-CoA (6-OCH-CoA) to yield 3-hydroxypimelyl-CoA. The protein is 6-oxocyclohex-1-ene-1-carbonyl-CoA hydrolase of Syntrophus aciditrophicus (strain SB).